The sequence spans 45 residues: uncharacterized protein (45 aa).

The chain crosses the membrane as a helical span at residues 15 to 37 (EVVGTLMAVLITFALVAVVFNFI).

The protein resides in the membrane. This is an uncharacterized protein from Archaeoglobus fulgidus (strain ATCC 49558 / DSM 4304 / JCM 9628 / NBRC 100126 / VC-16).